A 261-amino-acid chain; its full sequence is Hydroxyethylthiazole kinase (261 aa).

Residue Met-38 coordinates substrate. Arg-114 and Thr-159 together coordinate ATP. Gly-186 is a binding site for substrate.

It belongs to the Thz kinase family. The cofactor is Mg(2+).

It carries out the reaction 5-(2-hydroxyethyl)-4-methylthiazole + ATP = 4-methyl-5-(2-phosphooxyethyl)-thiazole + ADP + H(+). The protein operates within cofactor biosynthesis; thiamine diphosphate biosynthesis; 4-methyl-5-(2-phosphoethyl)-thiazole from 5-(2-hydroxyethyl)-4-methylthiazole: step 1/1. Functionally, catalyzes the phosphorylation of the hydroxyl group of 4-methyl-5-beta-hydroxyethylthiazole (THZ). In Streptococcus suis (strain 05ZYH33), this protein is Hydroxyethylthiazole kinase.